The sequence spans 132 residues: Evasin P985 (132 aa).

The first 24 residues, 1 to 24 (MHSTIAYVSLLPLALFVAMHGAST), serve as a signal peptide directing secretion. N45, N69, N74, N103, N111, and N117 each carry an N-linked (GlcNAc...) asparagine glycan. Cystine bridges form between C48–C70, C66–C109, C83–C114, and C104–C123.

The protein resides in the secreted. In terms of biological role, salivary chemokine-binding protein which binds to host chemokine CCL5. This chain is Evasin P985, found in Amblyomma parvum (South American tick).